We begin with the raw amino-acid sequence, 208 residues long: N-(5'-phosphoribosyl)anthranilate isomerase (208 aa).

It belongs to the TrpF family.

It catalyses the reaction N-(5-phospho-beta-D-ribosyl)anthranilate = 1-(2-carboxyphenylamino)-1-deoxy-D-ribulose 5-phosphate. Its pathway is amino-acid biosynthesis; L-tryptophan biosynthesis; L-tryptophan from chorismate: step 3/5. This Lactiplantibacillus plantarum (strain ATCC BAA-793 / NCIMB 8826 / WCFS1) (Lactobacillus plantarum) protein is N-(5'-phosphoribosyl)anthranilate isomerase.